Reading from the N-terminus, the 207-residue chain is GTP cyclohydrolase 1 (207 aa).

Residues C94, H97, and C167 each contribute to the Zn(2+) site.

This sequence belongs to the GTP cyclohydrolase I family. As to quaternary structure, toroid-shaped homodecamer, composed of two pentamers of five dimers.

The enzyme catalyses GTP + H2O = 7,8-dihydroneopterin 3'-triphosphate + formate + H(+). It participates in cofactor biosynthesis; 7,8-dihydroneopterin triphosphate biosynthesis; 7,8-dihydroneopterin triphosphate from GTP: step 1/1. The protein is GTP cyclohydrolase 1 of Thermobifida fusca (strain YX).